The sequence spans 348 residues: MTAPSQVLKIRRPDDWHLHLRDGDMLKTVMPYTSEIYGRAIVMPNLAPPVTTVEAAVAYRQRILDAVPAGHNFTPLMTCYLTDSLDPNELERGFNEGVFTAAKLYPANATTNSSHGVTSIDAIMPVLERMEKIGMPLLVHGEVTHADIDIFDREAHFIESVMEPLRQRLTALKVVFEHITTKDAADYVRDGNERLAATITPQHLMFNRNHMLVGGVRPHLYCLPILKRNIHQQALRELVASGFNRVFLGTDSAPHARHRKESSCGCAGCFNAPTALGSYATVFEEMNALQHFEAFCSVNGPQFYGLPVNDTFIELVREEQQVAESIALTDDTLVPFLAGETVRWSVKQ.

2 residues coordinate Zn(2+): H17 and H19. Substrate-binding positions include 19–21 and N45; that span reads HLR. Zn(2+)-binding residues include K103, H140, and H178. At K103 the chain carries N6-carboxylysine. H140 contacts substrate. L223 serves as a coordination point for substrate. D251 contributes to the Zn(2+) binding site. The active site involves D251. Residues H255 and A267 each coordinate substrate.

Belongs to the metallo-dependent hydrolases superfamily. DHOase family. Class II DHOase subfamily. Homodimer. Zn(2+) is required as a cofactor.

It catalyses the reaction (S)-dihydroorotate + H2O = N-carbamoyl-L-aspartate + H(+). Its pathway is pyrimidine metabolism; UMP biosynthesis via de novo pathway; (S)-dihydroorotate from bicarbonate: step 3/3. In terms of biological role, catalyzes the reversible cyclization of carbamoyl aspartate to dihydroorotate. This is Dihydroorotase from Shigella boydii serotype 4 (strain Sb227).